A 238-amino-acid polypeptide reads, in one-letter code: IkB-like protein (238 aa).

ANK repeat units lie at residues 48–80 (GSSV…IINH), 87–118 (GNSA…TRIC), 124–153 (GMTP…PTQK), and 158–187 (GFTA…PLYM). Residues 80 to 86 (HHRRDND) carry the Nuclear localization signal motif. The Nuclear localization signal signature appears at 202–213 (KKKPKIIITGCK). Residues 205–212 (PKIIITGC) carry the PxIxITxC motif; Interaction with host PPP3CA motif. An FLCV motif motif is present at residues 227–230 (FLCV).

Belongs to the asfivirus A238L family. As to quaternary structure, interacts with host PPIA. Interacts with host PPP3CA/Calcineurin. Interacts with host RELA/p65; interaction of the 32 kDa form with host RELA results in the formation of a stable complex with NF-kappa-B. Interacts with host PPP3R1. Interacts with host EP300; this interaction inhibits the association of host EP300 with host RELA, JUN and NFATC2. The protein exists in a 28 kDa and a 32 kDa form, probably due to post-translational modifications which are neither phosphorylation, nor sumoylation.

The protein localises to the host nucleus. Its subcellular location is the host cytoplasm. In terms of biological role, ikB-like protein that inhibits the binding of NF-kappa-B to DNA, thereby downregulating pro-inflammatory cytokine production. Forms a heterodimer with the NF-kappa-B subunit RELA/p65 and prevents the activation of the NF-kappa-B transcription factor. Inhibits calcineurin function, which is required for the induction of nuclear factor of activated T cells (NFAT)-dependent immune response genes. Prevents the binding of substrates to calcineurin without affecting the phosphatase activity. Does not contain the serine residues that are phosphorylated by host IkB kinase and thus is not degraded following stimulation of the NFkB pathway. This chain is IkB-like protein (A238L), found in Ornithodoros (relapsing fever ticks).